The sequence spans 284 residues: MTAQNIDGKAIARAIRTTLSDKVKARKEAGQRIPGLAVILVGLDPASQVYVGSKRKACEEVGFLSQSFDLPDTTSEDDLLALIDRCNEDPAIDGILVQLPLPAHIDSSKVIERIRPDKDVDGFHPYNVGRLAQRIPVLRSCTPMGIMTLIRSTGVDTYGLDAVVVGASNIVGRPMTLELLLAGCTTTTCHRFTKNLEDKVRQADLLVVAVGKPHFIPGDWIKPGAIVIDVGINRLDDGRLVGDVEFDVAAERAAFITPVPGGVGPMTIASLLENTLYAAENYHD.

NADP(+) is bound by residues Gly-166–Ser-168 and Ile-232.

The protein belongs to the tetrahydrofolate dehydrogenase/cyclohydrolase family. Homodimer.

It catalyses the reaction (6R)-5,10-methylene-5,6,7,8-tetrahydrofolate + NADP(+) = (6R)-5,10-methenyltetrahydrofolate + NADPH. It carries out the reaction (6R)-5,10-methenyltetrahydrofolate + H2O = (6R)-10-formyltetrahydrofolate + H(+). Its pathway is one-carbon metabolism; tetrahydrofolate interconversion. Functionally, catalyzes the oxidation of 5,10-methylenetetrahydrofolate to 5,10-methenyltetrahydrofolate and then the hydrolysis of 5,10-methenyltetrahydrofolate to 10-formyltetrahydrofolate. In Shewanella amazonensis (strain ATCC BAA-1098 / SB2B), this protein is Bifunctional protein FolD.